A 467-amino-acid chain; its full sequence is MNSLLLKLLLCVAITAAFPADKQDEPPATKEEMAENYLKRFYSLGTDGGPVGRKKHIQPFTEKLEQMQKFFGLKVTGTLDPKTVEVMEKPRCGVYDVGQYSTVAKSSAWQKKDLTYRILNFTPDLPQADVETAIQRAFKVWSDVTPLTFTRIYNEVSDIEISFTAGDHKDNSPFDGSGGILAHAFQPGNGIGGDAHFDEDETWTKTSEIYNLFLVAAHEFGHSLGLSHSTDQGALMYPTYSNTDPKTFQLPQDDINAIQYLYGKSSNPVQPTGPSTPSRCDPNVVFNAVTTMRGELIFFVKRFLWRKHPQASEAELMFVQAFWPSLPTNIDAAYENPITEQILVFKGSKYTALDGFDVVQGYPRNIYSLGFPKTVKRIDAAVHIEQLGKTYFFAAKKYWSYDEDKKQMDKGFPKQISNDFPGIPDKIDAAFYYRGRLYFFIGRSQFEYNINSKRIVQVLRSNSWLGC.

An N-terminal signal peptide occupies residues 1–17; that stretch reads MNSLLLKLLLCVAITAA. Positions 18-99 are excised as a propeptide; sequence FPADKQDEPP…PRCGVYDVGQ (82 aa). The Cysteine switch signature appears at 90 to 97; the sequence is PRCGVYDV. The Zn(2+) site is built by Cys92 and His218. Glu219 is an active-site residue. Zn(2+)-binding residues include His222 and His228. Hemopexin repeat units follow at residues 277–326, 327–373, 375–423, and 424–467; these read PSRC…WPSL, PTNI…GFPK, VKRI…FPGI, and PDKI…WLGC. An intrachain disulfide couples Cys280 to Cys467.

It belongs to the peptidase M10A family. It depends on Zn(2+) as a cofactor. The cofactor is Ca(2+). Expressed only transiently in whole animal, at time when tadpole feeding begins.

It is found in the secreted. It localises to the extracellular space. The protein resides in the extracellular matrix. With respect to regulation, up-regulated in the tail by thyroid hormone. Its function is as follows. Cleaves collagen type I. May play a role in larval tissue degeneration and adult organogenesis during amphibian metamorphosis. May be involved in tail resorption. In Xenopus laevis (African clawed frog), this protein is Matrix metalloproteinase-18 (mmp18).